Consider the following 240-residue polypeptide: Orotidine 5'-phosphate decarboxylase (240 aa).

Substrate contacts are provided by residues aspartate 19, lysine 41, 68 to 77, threonine 123, arginine 184, glutamine 193, glycine 213, and arginine 214; that span reads DYKYYDIEET. Lysine 70 (proton donor) is an active-site residue.

It belongs to the OMP decarboxylase family. Type 1 subfamily. In terms of assembly, homodimer.

It catalyses the reaction orotidine 5'-phosphate + H(+) = UMP + CO2. The protein operates within pyrimidine metabolism; UMP biosynthesis via de novo pathway; UMP from orotate: step 2/2. Catalyzes the decarboxylation of orotidine 5'-monophosphate (OMP) to uridine 5'-monophosphate (UMP). The chain is Orotidine 5'-phosphate decarboxylase from Nitrobacter winogradskyi (strain ATCC 25391 / DSM 10237 / CIP 104748 / NCIMB 11846 / Nb-255).